The primary structure comprises 183 residues: Interleukin-36 beta (183 aa).

Residues 1-30 constitute a propeptide that is removed on maturation; it reads MMAFPPQSCVHVLPPKSIQMWEPNHNTMHG.

It belongs to the IL-1 family. As to quaternary structure, interacts with cargo receptor TMED10; the interaction mediates the translocation from the cytoplasm into the ERGIC (endoplasmic reticulum-Golgi intermediate compartment) and thereby secretion. Post-translationally, N-terminal truncation leads to a dramatic enhancement of its activity (&gt;1000-fold).

The protein localises to the cytoplasm. It is found in the secreted. Functionally, cytokine that binds to and signals through the IL1RL2/IL-36R receptor which in turn activates NF-kappa-B and MAPK signaling pathways in target cells linked to a pro-inflammatory response. Part of the IL-36 signaling system that is thought to be present in epithelial barriers and to take part in local inflammatory response; similar to the IL-1 system with which it shares the coreceptor IL1RAP. Stimulates production of interleukin-6 and interleukin-8 in synovial fibrobasts, articular chondrocytes and mature adipocytes. Induces expression of a number of antimicrobial peptides including beta-defensin 4 and beta-defensin 103 as well as a number of matrix metalloproteases. Seems to be involved in skin inflammatory response by acting on keratinocytes, dendritic cells and indirectly on T-cells to drive tissue infiltration, cell maturation and cell proliferation. Induces the production of pro-inflammatory cytokines in bone marrow-derived dendritic cells (BMDCs), including IL-12, Il-1 beta, IL-6, TNF-alpha and IL-23, and activates p38 MAPK phosphorylation in BMDCs. Involved in dendritic cell maturation by stimulating the surface expression of CD80, CD86 and MHC class II. Induces the production of IFN-gamma, IL-4 and IL-17 by T-helper 1 (Th1) cells, cultured CD4(+) T-cells and splenocytes. This Mus musculus (Mouse) protein is Interleukin-36 beta.